A 228-amino-acid chain; its full sequence is Gliolectin (228 aa).

At 1–120 the chain is on the cytoplasmic side; it reads MLCPPMALGP…NPKAVSQAPR (120 aa). The chain crosses the membrane as a helical; Signal-anchor for type II membrane protein span at residues 121–137; that stretch reads GMALTPAQISASAKLIL. At 138–228 the chain is on the extracellular side; the sequence is QKCPESDRKK…GTSELADQKQ (91 aa). Positions 141-228 are disordered; it reads PESDRKKSNG…GTSELADQKQ (88 aa). Residues Asn-149, Asn-156, Asn-198, Asn-199, Asn-205, and Asn-218 are each glycosylated (N-linked (GlcNAc...) asparagine). The span at 195–213 shows a compositional bias: low complexity; sequence NNNNNSSSSNNNSNMNINN. The segment covering 218-228 has biased composition (polar residues); that stretch reads NGTSELADQKQ.

In terms of tissue distribution, expressed by a subset of glial cells found at the midline of the embryo stage 12 nervous system. Expression is highest during the formation of the embryonic axonal commissures, a process requiring midline glial cell function (at protein level).

The protein resides in the membrane. In terms of biological role, has a role in intercellular carbohydrate-mediated cell adhesion. The protein is Gliolectin of Drosophila melanogaster (Fruit fly).